We begin with the raw amino-acid sequence, 169 residues long: Secreted LysM effector Blys5 (169 aa).

The signal sequence occupies residues 1 to 19; that stretch reads MKLSVISAVFVSLAAAAAA. 2 LysM domains span residues 47–94 and 121–167; these read TYYQ…YYCV and QWYK…NVCV.

The protein belongs to the secreted LysM effector family.

Secreted effector that enables the plant pathogenic fungus to manipulate host defenses for successful infection. Required for the full virulence to infect insect hosts. Protects fungal hyphae against the hydrolytic activity of chitinase and plays an important role in evasion of insect immunities. Binds chitin and can additionally bind chitosan and cellulose. Coats and protects the cell walls of insect pathogens from host cell recognition and additionally shields fungal cells from the hydrolysis of insect chitinases. This is Secreted LysM effector Blys5 from Beauveria bassiana (strain ARSEF 2860) (White muscardine disease fungus).